Here is an 85-residue protein sequence, read N- to C-terminus: Beta-defensin 18 (85 aa).

Residues 1–23 (MQSTMKMFGIILMVIFSVSCGPS) form the signal peptide. 3 disulfides stabilise this stretch: Cys-39/Cys-65, Cys-46/Cys-60, and Cys-50/Cys-66.

The protein belongs to the beta-defensin family.

The protein resides in the secreted. Functionally, has antibacterial activity. This is Beta-defensin 18 (Defb18) from Mus musculus (Mouse).